A 351-amino-acid chain; its full sequence is Phosphoribosylformylglycinamidine cyclo-ligase (351 aa).

Belongs to the AIR synthase family.

It localises to the cytoplasm. The catalysed reaction is 2-formamido-N(1)-(5-O-phospho-beta-D-ribosyl)acetamidine + ATP = 5-amino-1-(5-phospho-beta-D-ribosyl)imidazole + ADP + phosphate + H(+). It functions in the pathway purine metabolism; IMP biosynthesis via de novo pathway; 5-amino-1-(5-phospho-D-ribosyl)imidazole from N(2)-formyl-N(1)-(5-phospho-D-ribosyl)glycinamide: step 2/2. This Burkholderia pseudomallei (strain 668) protein is Phosphoribosylformylglycinamidine cyclo-ligase.